The following is a 490-amino-acid chain: MNAGPLPEHLRRVHMVGIGGAGMSGIARILLDRGAQVSGSDAKESRGVLALRARGALVNIGHDGDALDLLPGGPTVVVTTHAAIPKTNPELVEANRRGIPVLLRPVVLADLMAGYRTLMVTGTHGKTSTTSMLIVALQHCGYDPSFAVGGELNEAGTNAHHGSGDVFVAEADESDGSLLQYRPNLIIVTNIEADHLDHFGSVEAYSAVFDEFAETLGSEGVLVVCLDDPGAAALARRAHERGIRVRGYGSADQAEAGDVPVAGQLRDWQFKDTGATAQIQLAGESAPRTMRLSVPGRHMALNALAAVVTAAEIGAAVDDVLDGLAGFEGVRRRFELVGSVESVRVFDDYAHHPTEVRTVLQAVSGIVAQQGFGRSVVVFQPHLYSRTAAFATEFADALSIADLVFVLDVYGAREAPLPGVTGALIVEQIAGAPVHYLPDLSTVAQQVAAATAPGDLVITMGAGDVTLQGKEIVRALRARANDWPPPGNGR.

Residue 122–128 (GTHGKTS) coordinates ATP.

The protein belongs to the MurCDEF family.

The protein localises to the cytoplasm. It catalyses the reaction UDP-N-acetyl-alpha-D-muramate + L-alanine + ATP = UDP-N-acetyl-alpha-D-muramoyl-L-alanine + ADP + phosphate + H(+). It participates in cell wall biogenesis; peptidoglycan biosynthesis. Its function is as follows. Cell wall formation. The polypeptide is UDP-N-acetylmuramate--L-alanine ligase (Mycobacteroides abscessus (strain ATCC 19977 / DSM 44196 / CCUG 20993 / CIP 104536 / JCM 13569 / NCTC 13031 / TMC 1543 / L948) (Mycobacterium abscessus)).